The primary structure comprises 626 residues: DNA polymerase 2 (626 aa).

It belongs to the DNA polymerase type-B family.

It carries out the reaction DNA(n) + a 2'-deoxyribonucleoside 5'-triphosphate = DNA(n+1) + diphosphate. In terms of biological role, this polymerase is devoid of exonuclease activity. This Saccharolobus solfataricus (strain ATCC 35092 / DSM 1617 / JCM 11322 / P2) (Sulfolobus solfataricus) protein is DNA polymerase 2 (dpo2).